We begin with the raw amino-acid sequence, 2278 residues long: 1-phosphatidylinositol 3-phosphate 5-kinase FAB1 (2278 aa).

Disordered stretches follow at residues 1-30 (MSSE…SVNT) and 76-144 (PPTS…LQLP). Serine 2 carries the post-translational modification N-acetylserine. The interval 2-676 (SSEEPHASIS…NSTKSFQRAQ (675 aa)) is required for localization to the vacuole membrane. 2 stretches are compositionally biased toward low complexity: residues 18 to 28 (VRSSSTGTSSV) and 76 to 89 (PPTS…TSTS). The span at 90–128 (HVTGTASHSNIKANANTSTSVNKKNLPPTTSGRIPSSTI) shows a compositional bias: polar residues. Serine 186 carries the phosphoserine modification. The segment at 240–299 (DESSKECFSCGKTFNTFRRKHHCRICGQIFCSSCTLLIDGDRFGCHAKMRVCYNCYEHAD) adopts an FYVE-type zinc-finger fold. The Zn(2+) site is built by cysteine 246, cysteine 249, cysteine 262, cysteine 265, cysteine 270, cysteine 273, cysteine 291, and cysteine 294. Disordered regions lie at residues 302–337 (EDSS…HSHS), 472–500 (ITIN…NNPA), 514–534 (NSVN…AQSS), 556–697 (FNYN…PNNS), and 727–766 (DSSP…NINT). The span at 472–498 (ITINNLNNTTSNNSNYNNTNSNSNINN) shows a compositional bias: low complexity. Polar residues predominate over residues 557-570 (NYNSKGPSQQNDTA). The span at 571 to 601 (NGNNDNNNNNNNNNNNNNNNSASGIADNNNI) shows a compositional bias: low complexity. Positions 602-611 (PSNDNGTTFT) are enriched in polar residues. Over residues 634–644 (LNEEDSSEDEG) the composition is skewed to acidic residues. Residues 665–679 (MRNSTKSFQRAQASL) show a composition bias toward polar residues. The span at 682-692 (MRFRRKSKSKH) shows a compositional bias: basic residues. A compositionally biased stretch (polar residues) spans 729 to 741 (SPLQDKASSSAAS). Over residues 749-763 (SNSSGSNNNSNSNSN) the composition is skewed to low complexity. A CCT domain region spans residues 766–1039 (TDPWKRIASI…KIKQVSEFMV (274 aa)). The tract at residues 1181 to 1500 (SSSQNLLGTG…TAKQLKKLFY (320 aa)) is CCR domain. The segment covering 1506–1554 (DSEDKKSLHDEKAKTRKPEKNELPLEGLKDVEKPKIDSKNTTENRDRTN) has biased composition (basic and acidic residues). Positions 1506 to 1627 (DSEDKKSLHD…TRPNIRKMSS (122 aa)) are disordered. Positions 1555-1564 (EPQNAVTITT) are enriched in polar residues. The span at 1580–1595 (LTVTPSASSVSSSLTP) shows a compositional bias: low complexity. Serine 1627 and serine 1630 each carry phosphoserine. The span at 1766–1776 (SGKTTASTHLN) shows a compositional bias: polar residues. Disordered stretches follow at residues 1766 to 1804 (SGKT…EPLP) and 1891 to 1972 (QQQQ…THSQ). Residues 1780–1799 (VVKETSENPKSIVRESDNSK) are compositionally biased toward basic and acidic residues. Positions 1918–1932 (DPSVNISPSVSTTSH) are enriched in polar residues. One can recognise a PIPK domain in the interval 1932–2266 (HNKGRDSEIS…RFREAMERYI (335 aa)). At serine 1938 the chain carries Phosphoserine. At threonine 1953 the chain carries Phosphothreonine.

Component of the PI(3,5)P2 regulatory complex, composed of ATG18, FIG4, FAB1, VAC14 and VAC7. VAC14 nucleates the assembly of the complex and serves as a scaffold. Mg(2+) is required as a cofactor. The cofactor is Mn(2+).

It is found in the vacuole membrane. It localises to the endosome membrane. It carries out the reaction a 1,2-diacyl-sn-glycero-3-phospho-(1D-myo-inositol-3-phosphate) + ATP = a 1,2-diacyl-sn-glycero-3-phospho-(1D-myo-inositol-3,5-bisphosphate) + ADP + H(+). It catalyses the reaction 1,2-dihexadecanoyl-sn-glycero-3-phospho-(1D-myo-inositol-3-phosphate) + ATP = 1,2-dihexadecanoyl-sn-glycero-3-phospho-(1D-myo-inositol-3,5-phosphate) + ADP + H(+). Activated by VAC14 and VAC7. VAC14 acts as a specific osmotic response regulator. The PI(3,5)P2 regulatory complex regulates both the synthesis and turnover of phosphatidylinositol 3,5-bisphosphate (PtdIns(3,5)P2). Catalyzes the phosphorylation of phosphatidylinositol 3-phosphate on the fifth hydroxyl of the myo-inositol ring, to form phosphatidylinositol 3,5-bisphosphate. Required for endocytic-vacuolar pathway and nuclear migration. The product of the reaction, PI(3,5)P2 is an important regulator of vacuole homeostasis perhaps by controlling membrane flux to and/or from the vacuole. PI(3,5)P2 regulates the transition between trans-SNARE complex formation and vacuole membrane fusion. Hyperosmotic shock-induced increase in the levels of PtdIns(3,5)P2 requires the presence of VAC7, VAC14, and/or FIG4. This is 1-phosphatidylinositol 3-phosphate 5-kinase FAB1 from Saccharomyces cerevisiae (strain ATCC 204508 / S288c) (Baker's yeast).